A 483-amino-acid polypeptide reads, in one-letter code: Replication factor C large subunit (483 aa).

44–51 (GSPGVGKT) is an ATP binding site. Positions 415–483 (AVDHGGGIFA…DGQAGLSDFM (69 aa)) are disordered. Residues 430 to 443 (AQSDTESDDDDDGD) show a composition bias toward acidic residues. Residues 451–463 (DEPKEESVNREQS) are compositionally biased toward basic and acidic residues.

It belongs to the activator 1 small subunits family. RfcL subfamily. Heteromultimer composed of small subunits (RfcS) and large subunits (RfcL).

Functionally, part of the RFC clamp loader complex which loads the PCNA sliding clamp onto DNA. The polypeptide is Replication factor C large subunit (Natronomonas pharaonis (strain ATCC 35678 / DSM 2160 / CIP 103997 / JCM 8858 / NBRC 14720 / NCIMB 2260 / Gabara) (Halobacterium pharaonis)).